The sequence spans 192 residues: Small ribosomal subunit protein bS16 (192 aa).

Residues 149 to 161 (EKKAAEAKAKAEA) are compositionally biased toward basic and acidic residues. Residues 149-192 (EKKAAEAKAKAEAEAAAAAEEATETEETPMEAAAEEAPAAESAE) form a disordered region. Residues 178–192 (MEAAAEEAPAAESAE) are compositionally biased toward low complexity.

Belongs to the bacterial ribosomal protein bS16 family.

This chain is Small ribosomal subunit protein bS16, found in Porphyromonas gingivalis (strain ATCC 33277 / DSM 20709 / CIP 103683 / JCM 12257 / NCTC 11834 / 2561).